A 155-amino-acid chain; its full sequence is Protein PtsT (155 aa).

In Geobacillus stearothermophilus (Bacillus stearothermophilus), this protein is Protein PtsT (ptsT).